Consider the following 280-residue polypeptide: Virginiamycin B lyase (280 aa).

Substrate is bound at residue His215. Glu254 contributes to the Mg(2+) binding site. His256 serves as the catalytic Proton acceptor. Glu271 provides a ligand contact to Mg(2+).

Belongs to the Vgb family. In terms of assembly, monomer. Requires Mg(2+) as cofactor.

Its function is as follows. Inactivates the type B streptogramin antibiotics by linearizing the lactone ring at the ester linkage, generating a free phenylglycine carboxylate and converting the threonyl moiety into 2-amino-butenoic acid. The protein is Virginiamycin B lyase of Mycobacterium sp. (strain KMS).